A 137-amino-acid polypeptide reads, in one-letter code: Basic phospholipase A2 beta-bungarotoxin A1 chain (137 aa).

The N-terminal stretch at 1-9 is a signal peptide; that stretch reads AVCVSLLGA. Positions 10–17 are excised as a propeptide; that stretch reads ANIPPHPL. Disulfide bonds link cysteine 44-cysteine 136, cysteine 46-cysteine 62, cysteine 61-cysteine 117, cysteine 68-cysteine 110, cysteine 78-cysteine 103, and cysteine 96-cysteine 108. Tyrosine 45, glycine 47, and glycine 49 together coordinate Ca(2+). The active site involves histidine 65. A Ca(2+)-binding site is contributed by aspartate 66. The active site involves aspartate 111.

It belongs to the phospholipase A2 family. Group I subfamily. D49 sub-subfamily. In terms of assembly, heterodimer; disulfide-linked. The A chain has phospholipase A2 activity and the B chain shows homology with the basic protease inhibitors. It depends on Ca(2+) as a cofactor. Expressed by the venom gland.

The protein localises to the secreted. It catalyses the reaction a 1,2-diacyl-sn-glycero-3-phosphocholine + H2O = a 1-acyl-sn-glycero-3-phosphocholine + a fatty acid + H(+). Its function is as follows. Snake venom phospholipase A2 (PLA2) that shows presynaptic neurotoxicity. The A chain has phospholipase activity. PLA2 catalyzes the calcium-dependent hydrolysis of the 2-acyl groups in 3-sn-phosphoglycerides. The polypeptide is Basic phospholipase A2 beta-bungarotoxin A1 chain (Bungarus candidus (Malayan krait)).